Consider the following 187-residue polypeptide: Protein GrpE (187 aa).

A disordered region spans residues 1 to 38 (MSEEKQTVEQNETEEQEIIEEQAAADEQQEETNESELL). Acidic residues predominate over residues 11–34 (NETEEQEIIEEQAAADEQQEETNE).

Belongs to the GrpE family. As to quaternary structure, homodimer.

It is found in the cytoplasm. Participates actively in the response to hyperosmotic and heat shock by preventing the aggregation of stress-denatured proteins, in association with DnaK and GrpE. It is the nucleotide exchange factor for DnaK and may function as a thermosensor. Unfolded proteins bind initially to DnaJ; upon interaction with the DnaJ-bound protein, DnaK hydrolyzes its bound ATP, resulting in the formation of a stable complex. GrpE releases ADP from DnaK; ATP binding to DnaK triggers the release of the substrate protein, thus completing the reaction cycle. Several rounds of ATP-dependent interactions between DnaJ, DnaK and GrpE are required for fully efficient folding. In Bacillus subtilis (strain 168), this protein is Protein GrpE.